The following is an 800-amino-acid chain: Probable inorganic carbon transporter subunit DabA (800 aa).

Zn(2+) is bound by residues Cys-329, Asp-331, His-488, and Cys-503.

This sequence belongs to the inorganic carbon transporter (TC 9.A.2) DabA family. In terms of assembly, forms a complex with DabB. Requires Zn(2+) as cofactor.

The protein localises to the cell inner membrane. Part of an energy-coupled inorganic carbon pump. The sequence is that of Probable inorganic carbon transporter subunit DabA from Roseobacter denitrificans (strain ATCC 33942 / OCh 114) (Erythrobacter sp. (strain OCh 114)).